Here is a 681-residue protein sequence, read N- to C-terminus: Methionine--tRNA ligase (681 aa).

The 'HIGH' region signature appears at 15–25; it reads PYANGPIHLGH. 4 residues coordinate Zn(2+): cysteine 146, cysteine 149, cysteine 159, and cysteine 162. The 'KMSKS' region motif lies at 332–336; sequence KMSKS. Lysine 335 lines the ATP pocket. Residues 547–569 are disordered; the sequence is DNMAQAPKDNGKAKKDKKEAKSE. Residues 555 to 569 show a composition bias toward basic and acidic residues; sequence DNGKAKKDKKEAKSE. A tRNA-binding domain is found at 580 to 681; sequence DFAKIDLRIA…SGAQPGMQVK (102 aa).

It belongs to the class-I aminoacyl-tRNA synthetase family. MetG type 1 subfamily. As to quaternary structure, homodimer. Zn(2+) is required as a cofactor.

The protein localises to the cytoplasm. The enzyme catalyses tRNA(Met) + L-methionine + ATP = L-methionyl-tRNA(Met) + AMP + diphosphate. Its function is as follows. Is required not only for elongation of protein synthesis but also for the initiation of all mRNA translation through initiator tRNA(fMet) aminoacylation. The chain is Methionine--tRNA ligase from Hahella chejuensis (strain KCTC 2396).